The primary structure comprises 713 residues: Leucine-rich repeat neuronal protein 2 (713 aa).

The signal sequence occupies residues 1–18; the sequence is MRLLVAPLLLAWVAGATA. The Extracellular segment spans residues 19–630; it reads AVPVVPWHVP…CHRALGDRPG (612 aa). Positions 20 to 69 constitute an LRRNT domain; it reads VPVVPWHVPCPPQCACQIRPWYTPRSSYREATTVDCNDLFLTAVPPALPA. LRR repeat units lie at residues 70-91, 94-115, 118-139, 142-163, 166-187, 190-211, 214-235, 238-259, 262-283, 286-305, 311-333, and 336-357; these read GTQT…ELGY, NLTE…DFHA, QLLS…SFAG, SLQE…AFSG, NLLR…WFEM, NLEI…NFRP, NLRS…ALEG, SLES…ALEQ, GLKF…DFAN, HLKE…DKFA, ELTK…AFHH, and QMET…TVES. The N-linked (GlcNAc...) asparagine glycan is linked to N94. Positions 369–422 constitute an LRRCT domain; that stretch reads NPIRCDCVIRWANATGTRVRFIEPQSTLCAEPPDLQRLPVREVPFREMTDHCLP. N-linked (GlcNAc...) asparagine glycosylation is present at N381. Positions 422 to 511 constitute an Ig-like C2-type domain; that stretch reads PLISPRSFPP…LVGADTKTVS (90 aa). The cysteines at positions 445 and 497 are disulfide-linked. 2 N-linked (GlcNAc...) asparagine glycosylation sites follow: N555 and N583. Residues 631–651 traverse the membrane as a helical segment; the sequence is LIAILALAVLLLAAGLAAHLG. At 652–713 the chain is on the cytoplasmic side; sequence TGQPRKGVGG…TLLPPLSQNS (62 aa).

In terms of tissue distribution, overamplified in malignant gliomas.

The protein localises to the membrane. The sequence is that of Leucine-rich repeat neuronal protein 2 (LRRN2) from Homo sapiens (Human).